The following is a 336-amino-acid chain: Phenylalanine--tRNA ligase alpha subunit (336 aa).

E255 is a binding site for Mg(2+).

It belongs to the class-II aminoacyl-tRNA synthetase family. Phe-tRNA synthetase alpha subunit type 1 subfamily. In terms of assembly, tetramer of two alpha and two beta subunits. The cofactor is Mg(2+).

Its subcellular location is the cytoplasm. The enzyme catalyses tRNA(Phe) + L-phenylalanine + ATP = L-phenylalanyl-tRNA(Phe) + AMP + diphosphate + H(+). The polypeptide is Phenylalanine--tRNA ligase alpha subunit (Gemmatimonas aurantiaca (strain DSM 14586 / JCM 11422 / NBRC 100505 / T-27)).